The primary structure comprises 209 residues: Ribosome maturation factor RimM (209 aa).

The disordered stretch occupies residues 1 to 28 (MARRPQRPAPSGRAGAGRGAAGAAPPGP). One can recognise a PRC barrel domain in the interval 123–197 (EDEFFTADLV…RVTIAPPEDL (75 aa)).

Belongs to the RimM family. In terms of assembly, binds ribosomal protein uS19.

It localises to the cytoplasm. Functionally, an accessory protein needed during the final step in the assembly of 30S ribosomal subunit, possibly for assembly of the head region. Essential for efficient processing of 16S rRNA. May be needed both before and after RbfA during the maturation of 16S rRNA. It has affinity for free ribosomal 30S subunits but not for 70S ribosomes. The protein is Ribosome maturation factor RimM of Methylobacterium sp. (strain 4-46).